Consider the following 125-residue polypeptide: uncharacterized protein (125 aa).

The protein resides in the plastid. This is an uncharacterized protein from Euglena longa (Euglenophycean alga).